Consider the following 367-residue polypeptide: Peroxidase 1 (367 aa).

An N-terminal signal peptide occupies residues 1 to 33 (MAKESKLTAGVAAALTVVAACALCLLLPATARA). Gln-34 carries the post-translational modification Pyrrolidone carboxylic acid. 4 disulfides stabilise this stretch: Cys-44–Cys-125, Cys-77–Cys-82, Cys-131–Cys-335, and Cys-209–Cys-244. The active-site Proton acceptor is His-75. Ca(2+) contacts are provided by Asp-76, Val-79, Gly-81, Asp-83, and Ser-85. Asn-164 carries N-linked (GlcNAc...) asparagine glycosylation. Pro-172 provides a ligand contact to substrate. His-202 contributes to the heme b binding site. A Ca(2+)-binding site is contributed by Thr-203. 2 N-linked (GlcNAc...) asparagine glycosylation sites follow: Asn-218 and Asn-247. Asp-259, Thr-262, and Asp-267 together coordinate Ca(2+). The N-linked (GlcNAc...) asparagine glycan is linked to Asn-303.

It belongs to the peroxidase family. Classical plant (class III) peroxidase subfamily. It depends on heme b as a cofactor. Requires Ca(2+) as cofactor. As to expression, expressed in the root tip meristems.

It is found in the secreted. The protein resides in the vacuole. The enzyme catalyses 2 a phenolic donor + H2O2 = 2 a phenolic radical donor + 2 H2O. Removal of H(2)O(2), oxidation of toxic reductants, biosynthesis and degradation of lignin, suberization, auxin catabolism, response to environmental stresses such as wounding, pathogen attack and oxidative stress. These functions might be dependent on each isozyme/isoform in each plant tissue. The chain is Peroxidase 1 (PER1) from Zea mays (Maize).